A 285-amino-acid chain; its full sequence is tRNA-cytidine(32) 2-sulfurtransferase (285 aa).

The PP-loop motif signature appears at 49–54 (SGGKDS). Residues Cys-124, Cys-127, and Cys-215 each contribute to the [4Fe-4S] cluster site.

It belongs to the TtcA family. Homodimer. The cofactor is Mg(2+). Requires [4Fe-4S] cluster as cofactor.

It localises to the cytoplasm. The catalysed reaction is cytidine(32) in tRNA + S-sulfanyl-L-cysteinyl-[cysteine desulfurase] + AH2 + ATP = 2-thiocytidine(32) in tRNA + L-cysteinyl-[cysteine desulfurase] + A + AMP + diphosphate + H(+). Its pathway is tRNA modification. Catalyzes the ATP-dependent 2-thiolation of cytidine in position 32 of tRNA, to form 2-thiocytidine (s(2)C32). The sulfur atoms are provided by the cysteine/cysteine desulfurase (IscS) system. In Hahella chejuensis (strain KCTC 2396), this protein is tRNA-cytidine(32) 2-sulfurtransferase.